We begin with the raw amino-acid sequence, 698 residues long: Sucrose non-fermenting protein kinase 1 (698 aa).

Positions 1-48 (MAPRGFEDEELTISLSSSHVRRPQQQQPPPPTQQQHAHQPGSRPADAP) are disordered. One can recognise a Protein kinase domain in the interval 62 to 313 (YKVLRTLGEG…IEDIRADPWF (252 aa)). Residues 68-76 (LGEGSFGKV) and Lys-91 each bind ATP. Catalysis depends on Asp-184, which acts as the Proton acceptor. The interval 320–417 (YLQLPVEEFF…ALLEPEGSSP (98 aa)) is auto-inhibitory domain (AID). The 38-residue stretch at 360–397 (VTEKISKTMGYGKNDVEEALQASEPSAIKDAYMIVREN) folds into the UBA domain. Disordered regions lie at residues 410 to 435 (LEPE…TTTA), 482 to 525 (TRTD…KKTK), and 564 to 597 (ESRH…IDPM). Positions 415–435 (SSPMLSMSSARSATSTTTTTA) are enriched in low complexity. Basic and acidic residues-rich tracts occupy residues 484–493 (TDAEKEETSR) and 564–573 (ESRHAEERAE).

Belongs to the protein kinase superfamily. CAMK Ser/Thr protein kinase family. SNF1 subfamily. In terms of assembly, component of the AMP-activated protein kinase complex also known as the SNF1 kinase complex (Snf1c), a heterotrimeric complex composed of a catalytic subunit alpha and 2 regulatory subunits beta and gamma.

Its subcellular location is the cytoplasm. The protein localises to the nucleus. The catalysed reaction is L-seryl-[protein] + ATP = O-phospho-L-seryl-[protein] + ADP + H(+). It catalyses the reaction L-threonyl-[protein] + ATP = O-phospho-L-threonyl-[protein] + ADP + H(+). Catalytic subunit of the AMP-activated protein kinase complex also known as the SNF1 kinase complex (Snf1c), a central regulator of cellular energy homeostasis, which, in response to a fall in intracellular ATP levels, activates energy-producing pathways and inhibits energy-consuming processes. The complex phosphorylates histone H3 to form H3S10ph, which promotes H3K14ac formation, leading to transcriptional activation through TBP recruitment to the promoters. Activates the expression of the galactose oxidase (GOA) gene and of several cell wall-degrading enzymes (CWDEs) such as pectate lyase, xylanase and glucanase. Plays an important role in sudden death syndrome (SDS) by controlling the colonization of the infected roots. This chain is Sucrose non-fermenting protein kinase 1, found in Fusarium virguliforme.